Here is a 216-residue protein sequence, read N- to C-terminus: Large ribosomal subunit protein uL3 (216 aa).

The tract at residues 136–155 is disordered; the sequence is GVSISHRSHGSTGQRQDPGK. Q151 is subject to N5-methylglutamine.

It belongs to the universal ribosomal protein uL3 family. As to quaternary structure, part of the 50S ribosomal subunit. Forms a cluster with proteins L14 and L19. Post-translationally, methylated by PrmB.

One of the primary rRNA binding proteins, it binds directly near the 3'-end of the 23S rRNA, where it nucleates assembly of the 50S subunit. In Rickettsia prowazekii (strain Madrid E), this protein is Large ribosomal subunit protein uL3.